Reading from the N-terminus, the 411-residue chain is Signal-transducing adaptor protein 2 (411 aa).

In terms of domain architecture, PH spans 20–120; the sequence is HYYESFLEKK…GFILTVVELR (101 aa). Residue tyrosine 22 is modified to Phosphotyrosine. The SH2 domain occupies 152–248; it reads WCFLQVSRLE…RALVPFLLDE (97 aa). Tyrosine 250 is modified (phosphotyrosine; by PTK6). Residues 291 to 320 form a disordered region; it reads VPVSVSSQEDKLPQLPPLPQLPDTDENYVT. 2 positions are modified to phosphotyrosine: tyrosine 318 and tyrosine 330. The disordered stretch occupies residues 338–364; sequence SSQAVPLKPKKPARLPAKPPKPSVVPK. Positions 390–410 form a coiled coil; it reads TRLGDITAELEEKLQKRRALE.

In terms of assembly, interacts with PTK6 and CSF1R. Phosphorylated on tyrosine. Phosphorylated by PTK6 at Tyr-250 modulates PTK6-mediated STAT3 activation. As to expression, widely expressed.

Its subcellular location is the cytoplasm. It is found in the membrane. Substrate of protein kinase PTK6. May play a regulatory role in the acute-phase response in systemic inflammation and may modulate STAT3 activity. This is Signal-transducing adaptor protein 2 (Stap2) from Mus musculus (Mouse).